We begin with the raw amino-acid sequence, 339 residues long: Tetraacyldisaccharide 4'-kinase (339 aa).

62–69 (VAGGTGKT) is a binding site for ATP.

Belongs to the LpxK family.

The enzyme catalyses a lipid A disaccharide + ATP = a lipid IVA + ADP + H(+). It functions in the pathway glycolipid biosynthesis; lipid IV(A) biosynthesis; lipid IV(A) from (3R)-3-hydroxytetradecanoyl-[acyl-carrier-protein] and UDP-N-acetyl-alpha-D-glucosamine: step 6/6. Transfers the gamma-phosphate of ATP to the 4'-position of a tetraacyldisaccharide 1-phosphate intermediate (termed DS-1-P) to form tetraacyldisaccharide 1,4'-bis-phosphate (lipid IVA). The sequence is that of Tetraacyldisaccharide 4'-kinase from Xylella fastidiosa (strain 9a5c).